A 510-amino-acid chain; its full sequence is Pyruvate kinase, cytosolic isozyme (510 aa).

Arg-50 lines the substrate pocket. K(+) contacts are provided by Asn-52, Ser-54, Asp-84, and Thr-85. Residue 52 to 55 (NFSH) participates in ATP binding. The ATP site is built by Arg-91 and Lys-176. Residue Glu-242 coordinates Mg(2+). Residues Gly-265, Asp-266, and Thr-298 each contribute to the substrate site. Asp-266 provides a ligand contact to Mg(2+).

This sequence belongs to the pyruvate kinase family. In terms of assembly, homotetramer. The cofactor is Mg(2+). It depends on K(+) as a cofactor.

The protein resides in the cytoplasm. It catalyses the reaction pyruvate + ATP = phosphoenolpyruvate + ADP + H(+). It functions in the pathway carbohydrate degradation; glycolysis; pyruvate from D-glyceraldehyde 3-phosphate: step 5/5. The protein is Pyruvate kinase, cytosolic isozyme of Solanum tuberosum (Potato).